The following is a 224-amino-acid chain: Non-structural protein V (224 aa).

2 disordered regions span residues 57–98 (IQYP…EPLF) and 144–172 (RTST…GHRR). Zn(2+) contacts are provided by H170, C189, C193, C205, C207, C210, C214, and C217.

It belongs to the paramyxoviruses V protein family. As to quaternary structure, interacts with host IFIH1/MDA5 and DHX58/LGP2. Forms with host DDB1, CUL4A, STAT1, STAT2 and STAT3 the mumps virus V-dependent complex (VDC).

It is found in the virion. Its subcellular location is the host cytoplasm. In terms of biological role, plays an essential role in the inhibition of host immune response. Prevents the establishment of cellular antiviral state by blocking interferon-alpha/beta (IFN-alpha/beta) production and signaling pathway. Interacts with host IFIH1/MDA5 and DHX58/LGP2 to inhibit the transduction pathway involved in the activation of IFN-beta promoter, thus protecting the virus against cell antiviral state. Blocks the type I and II interferon signaling pathways by interacting with host STAT1, STAT2 and STAT3, and mediating their ubiquitination and subsequent proteasomal degradation. This chain is Non-structural protein V, found in Mumps virus genotype N (strain L-Zagreb vaccine) (MuV).